We begin with the raw amino-acid sequence, 271 residues long: Tryptophan synthase alpha chain (271 aa).

Residues Glu49 and Asp60 each act as proton acceptor in the active site.

This sequence belongs to the TrpA family. As to quaternary structure, tetramer of two alpha and two beta chains.

It catalyses the reaction (1S,2R)-1-C-(indol-3-yl)glycerol 3-phosphate + L-serine = D-glyceraldehyde 3-phosphate + L-tryptophan + H2O. The protein operates within amino-acid biosynthesis; L-tryptophan biosynthesis; L-tryptophan from chorismate: step 5/5. The alpha subunit is responsible for the aldol cleavage of indoleglycerol phosphate to indole and glyceraldehyde 3-phosphate. The protein is Tryptophan synthase alpha chain of Paraburkholderia phymatum (strain DSM 17167 / CIP 108236 / LMG 21445 / STM815) (Burkholderia phymatum).